We begin with the raw amino-acid sequence, 334 residues long: LLMVLGFFFATYNLVSMIVGHKVGSDLGSIVDGKVEFTNTKSKFHVAVTATDAAYSQWQCRIMYYWYKKAKDMPGSAMGKFTRILHSGKEDQLMNEIPTFVVDPLPDGLDRGYIVLNRPWAFVQWLEKAVIDEEYILMAEPDHIFVNPLPNLASENEPAGYPFFYIKPAENEKIMRKFYPKEKGPVTDVDPIGNSPVIIHKYLLEEIAPTWVNVSLRMKDDPETDKVFGWVLEMYAYAVASALHGIKHTLRKDFMLQPPWDLEVGKTFIIHYTYGCDYNLKGKLTYGKIGEWRFDKRSYLMSPPPKNISLPPPGVPESVVRLVKMVNEATANIP.

The chain crosses the membrane as a helical; Signal-anchor span at residues 1 to 18; sequence LLMVLGFFFATYNLVSMI.

This sequence belongs to the RDN family.

The protein resides in the golgi apparatus membrane. The enzyme catalyses trans-4-hydroxy-L-prolyl-[protein] + UDP-beta-L-arabinofuranose = O-(beta-L-arabinofuranosyl)-trans-4-hydroxy-L-prolyl-[protein] + UDP + H(+). Functionally, probable glycosyltransferase involved in the O-arabinosylation of several proteins including extensins and small signaling peptides. Catalyzes the transfer of the initial L-arabinose to the hydroxyl group of Hyp residues. Probably involved in the arabinosylation of CLAVATA3/ESR-related (CLE) signaling peptides that move from root to shoot, to interact with receptor kinase signaling that regulates nodulation. Involved in long distance nodulation signaling events. Involved in the autoregulation of nodulation (AON), a long distance systemic signaling from root to shoot and back again, which allows legumes to limit the number of root nodules formed based on available nitrogen and previous rhizobial colonization. The sequence is that of Hydroxyproline O-arabinosyltransferase NOD3 from Pisum sativum (Garden pea).